A 390-amino-acid chain; its full sequence is uncharacterized protein (390 aa).

It belongs to the arsA ATPase family.

This is an uncharacterized protein from Streptomyces coelicolor (strain ATCC BAA-471 / A3(2) / M145).